A 283-amino-acid polypeptide reads, in one-letter code: Elongation factor Ts (283 aa).

Residues 80-83 (TDFV) form an involved in Mg(2+) ion dislocation from EF-Tu region.

This sequence belongs to the EF-Ts family.

It localises to the cytoplasm. In terms of biological role, associates with the EF-Tu.GDP complex and induces the exchange of GDP to GTP. It remains bound to the aminoacyl-tRNA.EF-Tu.GTP complex up to the GTP hydrolysis stage on the ribosome. The polypeptide is Elongation factor Ts (Salmonella agona (strain SL483)).